The chain runs to 244 residues: tRNA pseudouridine synthase A (244 aa).

Asp52 (nucleophile) is an active-site residue. Tyr110 lines the substrate pocket.

The protein belongs to the tRNA pseudouridine synthase TruA family. Homodimer.

It catalyses the reaction uridine(38/39/40) in tRNA = pseudouridine(38/39/40) in tRNA. Functionally, formation of pseudouridine at positions 38, 39 and 40 in the anticodon stem and loop of transfer RNAs. The polypeptide is tRNA pseudouridine synthase A (Finegoldia magna (strain ATCC 29328 / DSM 20472 / WAL 2508) (Peptostreptococcus magnus)).